We begin with the raw amino-acid sequence, 2572 residues long: Highly reducing polyketide synthase phiA (2572 aa).

Residues 11-438 form the Ketosynthase family 3 (KS3) domain; that stretch reads IMPIAVVGMS…GANAHVIIES (428 aa). Active-site for beta-ketoacyl synthase activity residues include Cys-186, His-321, and His-361. Residues 591–917 form the Malonyl-CoA:ACP transacylase (MAT) domain; that stretch reads FVFTGQGAQW…HTALARKKDA (327 aa). The segment at 983 to 1120 is N-terminal hotdog fold; the sequence is VDLLGVLERN…GLISVQTPQK (138 aa). The region spanning 983-1307 is the PKS/mFAS DH domain; the sequence is VDLLGVLERN…CATLERDGGG (325 aa). Residue His-1015 is the Proton acceptor; for dehydratase activity of the active site. A C-terminal hotdog fold region spans residues 1150-1307; the sequence is RKEIDVSQFY…CATLERDGGG (158 aa). Asp-1215 serves as the catalytic Proton donor; for dehydratase activity. Residues 1353–1654 form a methyltransferase (CMeT) domain region; it reads LERAAFYYLH…LSSSTNKTNY (302 aa). Residues 1870 to 2182 enclose the Enoyl reductase (ER) domain; it reads GLLDTLHFTE…TGGHMGKLVA (313 aa). The 178-residue stretch at 2206–2383 folds into the Ketoreductase (KR) domain; sequence ASYLLVGGLG…ATTLDLGAIS (178 aa). The region spanning 2484-2561 is the Carrier domain; the sequence is AASEAICDAL…GLAAKIAKRS (78 aa). Residue Ser-2521 is modified to O-(pantetheine 4'-phosphoryl)serine.

It depends on pantetheine 4'-phosphate as a cofactor.

Its pathway is secondary metabolite biosynthesis. Highly reducing polyketide synthase; part of the gene cluster that mediates the biosynthesis of the antihypercholesterolemic agents phomoidrides which are dimeric anhydrides. The pathway begins with the highly reducing polyketide synthase phiA that catalyzes the formation of a C12-fatty acyl-ACP, starting from one acetate and 5 malonate units. The hydrolase phiM is involved in the release of the C12-fatty acyl chain from phiA. The alkylcitrate synthase (ACS) phiJ and the alkylcitrate dehydratase (ACDH) phiI then give rise to decarboxylated monomeric anhydrides by coupling the C12-fatty acyl chain with oxalacetic acid. The cyclase phiC is responsible for the dimerization of the monomeric anhydrides which leads to the production of prephomoidride that contains the characteristic bicyclo[4.3.1]deca-1,6-diene system of phomoidrides. Iterative oxidation catalyzed by the alpha-ketoglutarate-dependent dioxygenase phiK produced then phomoidride A. Finally, the methyltransferase phiE converts phomoidride A to phomoidride B via an acetalization reaction. The phosphatidylethanolamine-binding protein phiB and phiN are not essential for dimerization and their functions have still to be determined. In Fungal sp. (strain ATCC 74256), this protein is Highly reducing polyketide synthase phiA.